Reading from the N-terminus, the 397-residue chain is 8-amino-7-oxononanoate synthase (397 aa).

A substrate-binding site is contributed by R24. Position 110–111 (110–111 (GY)) interacts with pyridoxal 5'-phosphate. Substrate is bound at residue H135. Positions 183, 211, and 240 each coordinate pyridoxal 5'-phosphate. K243 bears the N6-(pyridoxal phosphate)lysine mark. T357 contributes to the substrate binding site.

Belongs to the class-II pyridoxal-phosphate-dependent aminotransferase family. BioF subfamily. Homodimer. It depends on pyridoxal 5'-phosphate as a cofactor.

The enzyme catalyses 6-carboxyhexanoyl-[ACP] + L-alanine + H(+) = (8S)-8-amino-7-oxononanoate + holo-[ACP] + CO2. The protein operates within cofactor biosynthesis; biotin biosynthesis. In terms of biological role, catalyzes the decarboxylative condensation of pimeloyl-[acyl-carrier protein] and L-alanine to produce 8-amino-7-oxononanoate (AON), [acyl-carrier protein], and carbon dioxide. The polypeptide is 8-amino-7-oxononanoate synthase (Hydrogenovibrio crunogenus (strain DSM 25203 / XCL-2) (Thiomicrospira crunogena)).